The chain runs to 104 residues: NADH-quinone oxidoreductase subunit K (104 aa).

Transmembrane regions (helical) follow at residues 4–24, 31–51, and 67–87; these read VPASAYLTLAIILFCIGLFGA, VIVLVCIELMLNAANLNLVAF, and LFTMAVAAAEAAVGLAILIAL.

It belongs to the complex I subunit 4L family. NDH-1 is composed of 14 different subunits. Subunits NuoA, H, J, K, L, M, N constitute the membrane sector of the complex.

The protein resides in the cell membrane. It carries out the reaction a quinone + NADH + 5 H(+)(in) = a quinol + NAD(+) + 4 H(+)(out). NDH-1 shuttles electrons from NADH, via FMN and iron-sulfur (Fe-S) centers, to quinones in the respiratory chain. The immediate electron acceptor for the enzyme in this species is believed to be a menaquinone. Couples the redox reaction to proton translocation (for every two electrons transferred, four hydrogen ions are translocated across the cytoplasmic membrane), and thus conserves the redox energy in a proton gradient. This is NADH-quinone oxidoreductase subunit K from Bacillus cereus (strain AH820).